Reading from the N-terminus, the 438-residue chain is Xylose isomerase (438 aa).

Active-site residues include H100 and D103. Mg(2+) contacts are provided by E231, E267, H270, D295, D306, D308, and D338.

It belongs to the xylose isomerase family. Homotetramer. Mg(2+) is required as a cofactor.

The protein resides in the cytoplasm. It carries out the reaction alpha-D-xylose = alpha-D-xylulofuranose. The protein is Xylose isomerase of Pseudomonas fluorescens (strain Pf0-1).